A 609-amino-acid polypeptide reads, in one-letter code: UvrABC system protein C (609 aa).

One can recognise a GIY-YIG domain in the interval 16-94 (SSPGVYRMYD…IKQYMPKYNV (79 aa)). Positions 203–238 (QQVMSVLVQKMEQASSDMRYEQAALYRDQITALRRV) constitute a UVR domain.

It belongs to the UvrC family. As to quaternary structure, interacts with UvrB in an incision complex.

The protein localises to the cytoplasm. In terms of biological role, the UvrABC repair system catalyzes the recognition and processing of DNA lesions. UvrC both incises the 5' and 3' sides of the lesion. The N-terminal half is responsible for the 3' incision and the C-terminal half is responsible for the 5' incision. This chain is UvrABC system protein C, found in Shewanella pealeana (strain ATCC 700345 / ANG-SQ1).